Here is a 198-residue protein sequence, read N- to C-terminus: NAD(P)H quinone oxidoreductase PST1 (198 aa).

In terms of domain architecture, Flavodoxin-like spans Val-6 to Phe-192. FMN is bound by residues Ser-12–His-16 and Val-112–Gly-164.

The protein belongs to the WrbA family. The cofactor is FMN.

It is found in the cell membrane. The enzyme catalyses a quinone + NADH + H(+) = a quinol + NAD(+). It catalyses the reaction a quinone + NADPH + H(+) = a quinol + NADP(+). Its function is as follows. Flavodoxin-like protein (FLP) that plays a role in cell wall integrity, oxidative stress protection and virulence. FLPs act as NAD(P)H quinone oxidoreductases. Reduces ubiquinone (coenzyme Q), enabling it to serve as an antioxidant in the membrane. This is NAD(P)H quinone oxidoreductase PST1 from Candida albicans (strain SC5314 / ATCC MYA-2876) (Yeast).